Consider the following 2131-residue polypeptide: Protein Ycf2 (2131 aa).

1466–1473 (GSIGTGRS) provides a ligand contact to ATP.

This sequence belongs to the Ycf2 family.

The protein resides in the plastid. It is found in the chloroplast stroma. In terms of biological role, probable ATPase of unknown function. Its presence in a non-photosynthetic plant (Epifagus virginiana) and experiments in tobacco indicate that it has an essential function which is probably not related to photosynthesis. This chain is Protein Ycf2, found in Helianthus annuus (Common sunflower).